We begin with the raw amino-acid sequence, 250 residues long: UPF0736 protein RBAM_011410 (250 aa).

This sequence belongs to the UPF0736 family.

This chain is UPF0736 protein RBAM_011410, found in Bacillus velezensis (strain DSM 23117 / BGSC 10A6 / LMG 26770 / FZB42) (Bacillus amyloliquefaciens subsp. plantarum).